The following is an 85-amino-acid chain: High affinity immunoglobulin epsilon receptor subunit gamma (85 aa).

A signal peptide spans 1–18 (MIPAVVLLLLLLVEQAAA). At 19-23 (LGEPQ) the chain is on the extracellular side. The chain crosses the membrane as a helical span at residues 24–44 (LCYILDAILFLYGIVLTLLYC). At 45-85 (RLKLQVRKAATASEKSDGIYTGLSTRTQETYETLKHEKPPQ) the chain is on the cytoplasmic side. The region spanning 53–81 (AATASEKSDGIYTGLSTRTQETYETLKHE) is the ITAM domain. Residue tyrosine 64 is modified to Phosphotyrosine. Serine 68 carries the phosphoserine modification. Tyrosine 75 is subject to Phosphotyrosine. Threonine 77 carries the post-translational modification Phosphothreonine.

The protein belongs to the CD3Z/FCER1G family. In terms of assembly, igE Fc receptor is a tetramer of an alpha chain, a beta chain, and two disulfide linked gamma chains. Associates with FCGR1A; forms a functional signaling complex. The signaling subunit of immunoglobulin gamma (IgG) Fc receptor complex. As a homodimer or a heterodimer of CD247 and FCER1G, associates with the ligand binding subunit FCGR3A to form a functional receptor complex. Associates with CLEC6A. Interacts with CLEC4E. Interacts (via ITAM domain) with SYK (via SH2 domains); activates SYK, enabling integrin-mediated activation of neutrophils and macrophages. Interacts with CSF2RB and recruits SYK in response to IL3 stimulation; this interaction is direct. Interacts with CD300LH; the interaction may be indirect. Interacts with CD300LD. Interacts with TARM1.

It is found in the cell membrane. Adapter protein containing an immunoreceptor tyrosine-based activation motif (ITAM) that transduces activation signals from various immunoreceptors. As a component of the high-affinity immunoglobulin E (IgE) receptor, mediates allergic inflammatory signaling in mast cells. As a constitutive component of interleukin-3 receptor complex, selectively mediates interleukin 4/IL4 production by basophils priming T-cells toward effector T-helper 2 subset. Associates with pattern recognition receptors CLEC4D and CLEC4E to form a functional signaling complex in myeloid cells. Binding of mycobacterial trehalose 6,6'-dimycolate (TDM) to this receptor complex leads to phosphorylation of ITAM, triggering activation of SYK, CARD9 and NF-kappa-B, consequently driving maturation of antigen-presenting cells and shaping antigen-specific priming of T-cells toward effector T-helper 1 and T-helper 17 cell subtypes. May function cooperatively with other activating receptors. Functionally linked to integrin beta-2/ITGB2-mediated neutrophil activation. Also involved in integrin alpha-2/ITGA2-mediated platelet activation. This Bos taurus (Bovine) protein is High affinity immunoglobulin epsilon receptor subunit gamma (FCER1G).